An 809-amino-acid polypeptide reads, in one-letter code: Ribosome biogenesis protein ERB1 (809 aa).

Residues 1-107 (MSKSSKVGMT…SDTRSITDAI (107 aa)) are disordered. Composition is skewed to acidic residues over residues 30-70 (AEVD…EDSD) and 77-97 (LGEE…EPQE). Positions 267–383 (RFVPSKHEAK…LRKVPGYQES (117 aa)) are required for interaction with NOP7. The required for interaction with YTM1 stretch occupies residues 383 to 419 (SVRERFERCLDLYLAPRVRHNKLNIDPESLIPELPSP). WD repeat units follow at residues 435-474 (GHTD…QVFN) and 483-523 (NDED…FDIE). The disordered stretch occupies residues 545 to 569 (EEKFKNDEGNEDEDDEDDSATSTAV). Acidic residues predominate over residues 553–563 (GNEDEDDEDDS). 5 WD repeats span residues 593 to 635 (QCRK…SQSP), 638 to 676 (KSKG…LVKK), 679 to 718 (PGVR…TPYK), 722 to 762 (YHEK…DLMT), and 778 to 809 (VNSI…LWTT).

This sequence belongs to the WD repeat BOP1/ERB1 family. Component of the NOP7 complex, composed of ERB1, NOP7 and YTM1. The complex is held together by ERB1, which interacts with NOP7 via its N-terminal domain and with YTM1 via a high-affinity interaction between the seven-bladed beta-propeller domains of the 2 proteins. The NOP7 complex associates with the 66S pre-ribosome.

The protein resides in the nucleus. It is found in the nucleolus. The protein localises to the nucleoplasm. Its function is as follows. Component of the NOP7 complex, which is required for maturation of the 25S and 5.8S ribosomal RNAs and formation of the 60S ribosome. This is Ribosome biogenesis protein ERB1 from Scheffersomyces stipitis (strain ATCC 58785 / CBS 6054 / NBRC 10063 / NRRL Y-11545) (Yeast).